The primary structure comprises 346 residues: Large ribosomal subunit protein uL10 (346 aa).

The segment at 305 to 346 (EVPAAPAPEAKEEKKEEAEEEEEEKKEVSEEDLSAGLGALFG) is disordered. The segment covering 322–337 (AEEEEEEKKEVSEEDL) has biased composition (acidic residues).

This sequence belongs to the universal ribosomal protein uL10 family. As to quaternary structure, part of the 50S ribosomal subunit. Forms part of the ribosomal stalk which helps the ribosome interact with GTP-bound translation factors. Forms a heptameric L10(L12)2(L12)2(L12)2 complex, where L10 forms an elongated spine to which the L12 dimers bind in a sequential fashion.

In terms of biological role, forms part of the ribosomal stalk, playing a central role in the interaction of the ribosome with GTP-bound translation factors. This chain is Large ribosomal subunit protein uL10, found in Ignicoccus hospitalis (strain KIN4/I / DSM 18386 / JCM 14125).